The chain runs to 618 residues: UvrABC system protein C (618 aa).

The GIY-YIG domain occupies 15-93 (RTPGVYLMKD…IKEHHPRYNI (79 aa)). Residues 203 to 238 (NNLLRELRERMKMAAEQMNYEEAAFLRDRIRAIEET) form the UVR domain.

This sequence belongs to the UvrC family. In terms of assembly, interacts with UvrB in an incision complex.

It localises to the cytoplasm. Functionally, the UvrABC repair system catalyzes the recognition and processing of DNA lesions. UvrC both incises the 5' and 3' sides of the lesion. The N-terminal half is responsible for the 3' incision and the C-terminal half is responsible for the 5' incision. This Syntrophus aciditrophicus (strain SB) protein is UvrABC system protein C.